We begin with the raw amino-acid sequence, 533 residues long: Pre-mRNA-splicing factor cwf24 (533 aa).

The segment covering methionine 1–asparagine 17 has biased composition (polar residues). The tract at residues methionine 1–glycine 69 is disordered. Residues serine 27–phenylalanine 43 are compositionally biased toward basic residues. The C3H1-type zinc-finger motif lies at aspartate 184–glutamate 212. An RING-type zinc finger spans residues cysteine 254–glycine 292. Positions tyrosine 379–serine 524 constitute an N-acetyltransferase domain.

Belongs to the CWC24 family. As to quaternary structure, belongs to the 40S cdc5-associated complex (or cwf complex), a spliceosome sub-complex reminiscent of a late-stage spliceosome composed of the U2, U5 and U6 snRNAs and at least brr2, cdc5, cwf2/prp3, cwf3/syf1, cwf4/syf3, cwf5/ecm2, spp42/cwf6, cwf7/spf27, cwf8, cwf9, cwf10, cwf11, cwf12, prp45/cwf13, cwf14, cwf15, cwf16, cwf17, cwf18, cwf19, cwf20, cwf21, cwf22, cwf23, cwf24, cwf25, cwf26, cyp7/cwf27, cwf28, cwf29/ist3, lea1, msl1, prp5/cwf1, prp10, prp12/sap130, prp17, prp22, sap61, sap62, sap114, sap145, slu7, smb1, smd1, smd3, smf1, smg1 and syf2.

The protein localises to the nucleus. Functionally, involved in mRNA splicing. The chain is Pre-mRNA-splicing factor cwf24 (cwf24) from Schizosaccharomyces pombe (strain 972 / ATCC 24843) (Fission yeast).